The following is a 253-amino-acid chain: PAXIP1-associated glutamate-rich protein 1 (253 aa).

Disordered stretches follow at residues 1–109 and 128–253; these read MSLV…MPPP and QAEI…QRKY. Positions 51-62 are enriched in basic and acidic residues; it reads EGGREEAEHEGS. Residues 116–160 are sufficient for interaction with NCOA1; the sequence is YELLAAHGTLELQAEILPRRPPTPEAQSEEERSDEEPEAKEEEEE. At T138 the chain carries Phosphothreonine. Acidic residues predominate over residues 142 to 159; that stretch reads QSEEERSDEEPEAKEEEE. Residues S143 and S148 each carry the phosphoserine modification. A sufficient for interaction with ESR1 region spans residues 161–253; sequence KPHMPTEFDF…GSLFPRQRKY (93 aa). Positions 195–223 are enriched in basic and acidic residues; it reads QKREARLDKVLSDMKRHKKLEEQILRTGR. The residue at position 237 (S237) is a Phosphoserine.

In terms of assembly, component of the KMT2 family MLL2/MLL3 complex, at least composed of the histone methyltransferases KMT2D and/or KMT2C, the common complex subunits ASH2L, RBBP5, WDR5 and DPY30, and the complex type-specific subunits PAXIP1/PTIP, PAGR1, NCOA6 and KDM6A; PAXIP1 is required for the association with the MLL2/MLL3 complex. Forms a constitutive complex with PAXIP1/PTIP independently of the MLL2/MLL3 complex. Interacts with NCOA1, ESR1, NR3C1, AR.

It is found in the nucleus. Its association with the histone methyltransferase MLL2/MLL3 complex is suggesting a role in epigenetic transcriptional activation. However, in association with PAXIP1/PTIP is proposed to function at least in part independently of the MLL2/MLL3 complex. Proposed to be recruited by PAXIP1 to sites of DNA damage where the PAGR1:PAXIP1 complex is required for cell survival in response to DNA damage independently of the MLL2/MLL3 complex. However, its function in DNA damage has been questioned. During immunoglobulin class switching in activated B-cells is involved in transcription regulation of downstream switch regions at the immunoglobulin heavy-chain (Igh) locus independently of the MLL2/MLL3 complex. Involved in both estrogen receptor-regulated gene transcription and estrogen-stimulated G1/S cell-cycle transition. Acts as a transcriptional cofactor for nuclear hormone receptors. Inhibits the induction properties of several steroid receptors such as NR3C1, AR and PPARG; the mechanism of inhibition appears to be gene-dependent. The sequence is that of PAXIP1-associated glutamate-rich protein 1 (PAGR1) from Bos taurus (Bovine).